Reading from the N-terminus, the 109-residue chain is Cell division protein ZapA (109 aa).

Positions Pro21 to Gln97 form a coiled coil.

This sequence belongs to the ZapA family. Type 1 subfamily. As to quaternary structure, homodimer. Interacts with FtsZ.

It is found in the cytoplasm. Its function is as follows. Activator of cell division through the inhibition of FtsZ GTPase activity, therefore promoting FtsZ assembly into bundles of protofilaments necessary for the formation of the division Z ring. It is recruited early at mid-cell but it is not essential for cell division. This Enterobacter sp. (strain 638) protein is Cell division protein ZapA.